A 150-amino-acid chain; its full sequence is Viral late gene transcription factor 2 (150 aa).

This sequence belongs to the orthopoxvirus VLTF-2/OPG126 family. Interacts with itself. Interacts with the late transcription factors VLTF-1/OPG093.

Acts with RNA polymerase to initiate transcription from late gene promoters. This is Viral late gene transcription factor 2 (OPG126) from Vaccinia virus (strain Copenhagen) (VACV).